Here is a 244-residue protein sequence, read N- to C-terminus: 7-cyano-7-deazaguanine synthase (244 aa).

An ATP-binding site is contributed by 14–24 (FSGGQDSATCV). Zn(2+)-binding residues include Cys-202, Cys-217, Cys-220, and Cys-223.

It belongs to the QueC family. Zn(2+) is required as a cofactor.

The enzyme catalyses 7-carboxy-7-deazaguanine + NH4(+) + ATP = 7-cyano-7-deazaguanine + ADP + phosphate + H2O + H(+). The protein operates within purine metabolism; 7-cyano-7-deazaguanine biosynthesis. Catalyzes the ATP-dependent conversion of 7-carboxy-7-deazaguanine (CDG) to 7-cyano-7-deazaguanine (preQ(0)). This Burkholderia multivorans (strain ATCC 17616 / 249) protein is 7-cyano-7-deazaguanine synthase.